A 130-amino-acid chain; its full sequence is Small ribosomal subunit protein uS8 (130 aa).

The protein belongs to the universal ribosomal protein uS8 family. As to quaternary structure, part of the 30S ribosomal subunit.

Its function is as follows. One of the primary rRNA binding proteins, it binds directly to 16S rRNA central domain where it helps coordinate assembly of the platform of the 30S subunit. This is Small ribosomal subunit protein uS8 from Natronomonas pharaonis (strain ATCC 35678 / DSM 2160 / CIP 103997 / JCM 8858 / NBRC 14720 / NCIMB 2260 / Gabara) (Halobacterium pharaonis).